A 297-amino-acid polypeptide reads, in one-letter code: 2-phospho-L-lactate transferase (297 aa).

7,8-didemethyl-8-hydroxy-5-deazariboflavin is bound at residue Asp49.

The protein belongs to the CofD family. Homodimer. Requires Mg(2+) as cofactor.

It catalyses the reaction (2S)-lactyl-2-diphospho-5'-guanosine + 7,8-didemethyl-8-hydroxy-5-deazariboflavin = oxidized coenzyme F420-0 + GMP + H(+). It functions in the pathway cofactor biosynthesis; coenzyme F420 biosynthesis. Its function is as follows. Catalyzes the transfer of the 2-phospholactate moiety from (2S)-lactyl-2-diphospho-5'-guanosine to 7,8-didemethyl-8-hydroxy-5-deazariboflavin (FO) with the formation of oxidized coenzyme F420-0 and GMP. The sequence is that of 2-phospho-L-lactate transferase from Methanospirillum hungatei JF-1 (strain ATCC 27890 / DSM 864 / NBRC 100397 / JF-1).